Here is a 461-residue protein sequence, read N- to C-terminus: Argininosuccinate lyase (461 aa).

It belongs to the lyase 1 family. Argininosuccinate lyase subfamily.

Its subcellular location is the cytoplasm. The catalysed reaction is 2-(N(omega)-L-arginino)succinate = fumarate + L-arginine. It participates in amino-acid biosynthesis; L-arginine biosynthesis; L-arginine from L-ornithine and carbamoyl phosphate: step 3/3. The polypeptide is Argininosuccinate lyase (Dehalococcoides mccartyi (strain CBDB1)).